The chain runs to 880 residues: Endoglucanase E-4 (880 aa).

Positions 1 to 46 (MSVTEPPPRRRGRHSRARRFLTSLGATAALTAGMLGVPLATGTAHA) are cleaved as a signal peptide. The active-site Nucleophile is the aspartate 104. Active-site residues include histidine 422, histidine 427, aspartate 461, and glutamate 470. In terms of domain architecture, CBM3 spans 504 to 652 (PDGPEIFVEA…GVPVWGTAPE (149 aa)). The interval 647 to 688 (WGTAPEEGEEPGGGEGPGGGEEPGEDVTPPSAPGSPAVRDVT) is disordered. One can recognise a Fibronectin type-III domain in the interval 678–770 (APGSPAVRDV…TVSFTTLAEN (93 aa)). The region spanning 771–880 (GGGPDASCTV…TLNGEPCALA (110 aa)) is the CBM2 domain.

Belongs to the glycosyl hydrolase 9 (cellulase E) family.

It carries out the reaction Endohydrolysis of (1-&gt;4)-beta-D-glucosidic linkages in cellulose, lichenin and cereal beta-D-glucans.. It participates in glycan metabolism; cellulose degradation. The polypeptide is Endoglucanase E-4 (celD) (Thermobifida fusca (Thermomonospora fusca)).